Here is a 264-residue protein sequence, read N- to C-terminus: Thymidylate synthase (264 aa).

R21 is a dUMP binding site. H51 lines the (6R)-5,10-methylene-5,6,7,8-tetrahydrofolate pocket. Residue 126–127 (RR) participates in dUMP binding. The Nucleophile role is filled by C146. DUMP-binding positions include 166–169 (RSCD), N177, and 207–209 (HLY). D169 contributes to the (6R)-5,10-methylene-5,6,7,8-tetrahydrofolate binding site. A263 contributes to the (6R)-5,10-methylene-5,6,7,8-tetrahydrofolate binding site.

Belongs to the thymidylate synthase family. Bacterial-type ThyA subfamily. Homodimer.

The protein localises to the cytoplasm. The enzyme catalyses dUMP + (6R)-5,10-methylene-5,6,7,8-tetrahydrofolate = 7,8-dihydrofolate + dTMP. It participates in pyrimidine metabolism; dTTP biosynthesis. Catalyzes the reductive methylation of 2'-deoxyuridine-5'-monophosphate (dUMP) to 2'-deoxythymidine-5'-monophosphate (dTMP) while utilizing 5,10-methylenetetrahydrofolate (mTHF) as the methyl donor and reductant in the reaction, yielding dihydrofolate (DHF) as a by-product. This enzymatic reaction provides an intracellular de novo source of dTMP, an essential precursor for DNA biosynthesis. This Shewanella oneidensis (strain ATCC 700550 / JCM 31522 / CIP 106686 / LMG 19005 / NCIMB 14063 / MR-1) protein is Thymidylate synthase.